Reading from the N-terminus, the 362-residue chain is Homoisocitrate dehydrogenase (362 aa).

79 to 81 (VQS) is a binding site for NADH. Ser81 provides a ligand contact to (2R,3S)-homoisocitrate. Ser81 and Ser91 each carry phosphoserine. (2R,3S)-homoisocitrate-binding residues include Arg97, Arg107, Arg126, Tyr133, Lys196, and Asn198. NADH is bound at residue Asn198. Mg(2+) is bound by residues Asp232, Asp256, and Asp260. NADH contacts are provided by residues 289–293 (GSAPD) and Asn301.

It belongs to the isocitrate and isopropylmalate dehydrogenases family. It depends on Mg(2+) as a cofactor.

Its subcellular location is the cytoplasm. It carries out the reaction (2R,3S)-homoisocitrate + NAD(+) = 2-oxoadipate + CO2 + NADH. Its pathway is amino-acid biosynthesis; L-lysine biosynthesis via AAA pathway; L-alpha-aminoadipate from 2-oxoglutarate: step 4/5. The polypeptide is Homoisocitrate dehydrogenase (lys12) (Schizosaccharomyces pombe (strain 972 / ATCC 24843) (Fission yeast)).